A 218-amino-acid polypeptide reads, in one-letter code: Protein-L-isoaspartate O-methyltransferase (218 aa).

S60 is a catalytic residue.

It belongs to the methyltransferase superfamily. L-isoaspartyl/D-aspartyl protein methyltransferase family.

Its subcellular location is the cytoplasm. It carries out the reaction [protein]-L-isoaspartate + S-adenosyl-L-methionine = [protein]-L-isoaspartate alpha-methyl ester + S-adenosyl-L-homocysteine. Catalyzes the methyl esterification of L-isoaspartyl residues in peptides and proteins that result from spontaneous decomposition of normal L-aspartyl and L-asparaginyl residues. It plays a role in the repair and/or degradation of damaged proteins. The chain is Protein-L-isoaspartate O-methyltransferase from Roseiflexus castenholzii (strain DSM 13941 / HLO8).